Consider the following 637-residue polypeptide: Biosynthetic arginine decarboxylase (637 aa).

Position 101 is an N6-(pyridoxal phosphate)lysine (Lys-101). 286–296 (FDVGGGLAVDY) provides a ligand contact to substrate.

This sequence belongs to the Orn/Lys/Arg decarboxylase class-II family. SpeA subfamily. The cofactor is Mg(2+). It depends on pyridoxal 5'-phosphate as a cofactor.

The catalysed reaction is L-arginine + H(+) = agmatine + CO2. Its pathway is amine and polyamine biosynthesis; agmatine biosynthesis; agmatine from L-arginine: step 1/1. Its function is as follows. Catalyzes the biosynthesis of agmatine from arginine. In Shewanella woodyi (strain ATCC 51908 / MS32), this protein is Biosynthetic arginine decarboxylase.